A 776-amino-acid polypeptide reads, in one-letter code: 5-methyltetrahydropteroyltriglutamate--homocysteine methyltransferase (776 aa).

5-methyltetrahydropteroyltri-L-glutamate-binding positions include 13–16 (RELK) and Lys127. Residues 450–452 (IGS) and Glu503 each bind L-homocysteine. L-methionine is bound by residues 450 to 452 (IGS) and Glu503. Trp580 lines the 5-methyltetrahydropteroyltri-L-glutamate pocket. Asp618 is an L-homocysteine binding site. Asp618 is an L-methionine binding site. Glu624 lines the 5-methyltetrahydropteroyltri-L-glutamate pocket. Zn(2+) is bound by residues His660, Cys662, and Glu684. The Proton donor role is filled by His713. Cys745 serves as a coordination point for Zn(2+).

Belongs to the vitamin-B12 independent methionine synthase family. Requires Zn(2+) as cofactor.

The catalysed reaction is 5-methyltetrahydropteroyltri-L-glutamate + L-homocysteine = tetrahydropteroyltri-L-glutamate + L-methionine. The protein operates within amino-acid biosynthesis; L-methionine biosynthesis via de novo pathway; L-methionine from L-homocysteine (MetE route): step 1/1. Its function is as follows. Catalyzes the transfer of a methyl group from 5-methyltetrahydrofolate to homocysteine resulting in methionine formation. This chain is 5-methyltetrahydropteroyltriglutamate--homocysteine methyltransferase, found in Mesorhizobium japonicum (strain LMG 29417 / CECT 9101 / MAFF 303099) (Mesorhizobium loti (strain MAFF 303099)).